We begin with the raw amino-acid sequence, 313 residues long: Porphobilinogen deaminase (313 aa).

C241 is subject to S-(dipyrrolylmethanemethyl)cysteine.

It belongs to the HMBS family. As to quaternary structure, monomer. Requires dipyrromethane as cofactor.

It catalyses the reaction 4 porphobilinogen + H2O = hydroxymethylbilane + 4 NH4(+). The protein operates within porphyrin-containing compound metabolism; protoporphyrin-IX biosynthesis; coproporphyrinogen-III from 5-aminolevulinate: step 2/4. Functionally, tetrapolymerization of the monopyrrole PBG into the hydroxymethylbilane pre-uroporphyrinogen in several discrete steps. In Bacillus velezensis (strain DSM 23117 / BGSC 10A6 / LMG 26770 / FZB42) (Bacillus amyloliquefaciens subsp. plantarum), this protein is Porphobilinogen deaminase.